Reading from the N-terminus, the 450-residue chain is Chromosomal replication initiator protein DnaA (450 aa).

The interval 1-84 is domain I, interacts with DnaA modulators; the sequence is MENIHDLWDR…AVKFIIPPNQ (84 aa). The domain II stretch occupies residues 84–111; sequence QADEKLELPSSAKKQRKPYEEANDFPQS. Positions 112 to 328 are domain III, AAA+ region; the sequence is MLNPKYTFDT…GALIRVVAYS (217 aa). Gly-156, Gly-158, Lys-159, and Thr-160 together coordinate ATP. The interval 329–450 is domain IV, binds dsDNA; the sequence is SLINKEITAD…KEIQEKLKQL (122 aa).

It belongs to the DnaA family. In terms of assembly, oligomerizes as a right-handed, spiral filament on DNA at oriC.

The protein localises to the cytoplasm. Functionally, plays an essential role in the initiation and regulation of chromosomal replication. ATP-DnaA binds to the origin of replication (oriC) to initiate formation of the DNA replication initiation complex once per cell cycle. Binds the DnaA box (a 9 base pair repeat at the origin) and separates the double-stranded (ds)DNA. Forms a right-handed helical filament on oriC DNA; dsDNA binds to the exterior of the filament while single-stranded (ss)DNA is stabiized in the filament's interior. The ATP-DnaA-oriC complex binds and stabilizes one strand of the AT-rich DNA unwinding element (DUE), permitting loading of DNA polymerase. After initiation quickly degrades to an ADP-DnaA complex that is not apt for DNA replication. Binds acidic phospholipids. In Geobacillus thermodenitrificans (strain NG80-2), this protein is Chromosomal replication initiator protein DnaA.